The primary structure comprises 277 residues: Energy-coupling factor transporter ATP-binding protein EcfA1 (277 aa).

An ABC transporter domain is found at 5-242; that stretch reads VKVNNISFEY…IKMLKEIGLD (238 aa). ATP is bound at residue 41–48; it reads GHNGSGKS.

Belongs to the ABC transporter superfamily. Energy-coupling factor EcfA family. As to quaternary structure, forms a stable energy-coupling factor (ECF) transporter complex composed of 2 membrane-embedded substrate-binding proteins (S component), 2 ATP-binding proteins (A component) and 2 transmembrane proteins (T component).

The protein localises to the cell membrane. ATP-binding (A) component of a common energy-coupling factor (ECF) ABC-transporter complex. Unlike classic ABC transporters this ECF transporter provides the energy necessary to transport a number of different substrates. The chain is Energy-coupling factor transporter ATP-binding protein EcfA1 from Clostridioides difficile (strain 630) (Peptoclostridium difficile).